The chain runs to 478 residues: UDP-N-acetylmuramate--L-alanine ligase (478 aa).

120–126 is an ATP binding site; that stretch reads GSHGKTT.

The protein belongs to the MurCDEF family.

The protein localises to the cytoplasm. It carries out the reaction UDP-N-acetyl-alpha-D-muramate + L-alanine + ATP = UDP-N-acetyl-alpha-D-muramoyl-L-alanine + ADP + phosphate + H(+). It participates in cell wall biogenesis; peptidoglycan biosynthesis. Its function is as follows. Cell wall formation. The sequence is that of UDP-N-acetylmuramate--L-alanine ligase from Rickettsia bellii (strain OSU 85-389).